The following is a 375-amino-acid chain: Sulfite efflux pump SSU1 (375 aa).

Topologically, residues 1-25 are cytoplasmic; the sequence is MPSGSGFHNIEEAGEKARKRDDWIA. A helical transmembrane segment spans residues 26–46; it reads ISNFHPGWFSVNMGTGITAIL. The Extracellular segment spans residues 47–59; sequence LQNLPYQFPGLHY. The chain crosses the membrane as a helical span at residues 60-80; that stretch reads IAVILFILNVIIFFLFLTISI. The Cytoplasmic segment spans residues 81–101; it reads TRYCLWPDKFKAMLAHPAHSM. Residues 102 to 122 form a helical membrane-spanning segment; sequence LLGTFPMGFATIINCIVFICV. Over 123–135 the chain is Extracellular; it reads PVWGEWASRFAWG. Residues 136-156 traverse the membrane as a helical segment; that stretch reads LWWIDAAVSVAICYFVPFMLM. Topologically, residues 157 to 167 are cytoplasmic; it reads TKHTSSLETMT. A helical membrane pass occupies residues 168 to 188; it reads AAWLLPIVAPVVAAASGGVVA. The Extracellular segment spans residues 189-200; sequence DSLQNDTHALIT. An N-linked (GlcNAc...) asparagine glycan is attached at asparagine 193. Residues 201 to 221 traverse the membrane as a helical segment; it reads ILVCYVMWGSAVPLAMVILVI. At 222–234 the chain is on the cytoplasmic side; sequence YFQRLAIHKLVPR. The helical transmembrane segment at 235 to 255 threads the bilayer; it reads AAIVSALLPIGPLGQGGFGLM. Residues 256–277 are Extracellular-facing; the sequence is QLGVVAKRVFPRLDFLAPIAGD. The chain crosses the membrane as a helical span at residues 278–298; that stretch reads IFYVMGAFIAMIMWGFGLIWL. The Cytoplasmic segment spans residues 299–309; that stretch reads WFALASFTRGK. Residues 310 to 330 traverse the membrane as a helical segment; sequence FYFNIGWWAFTFPLGVFTTAT. The Extracellular segment spans residues 331–343; sequence TQMGKEFNSPFFD. The chain crosses the membrane as a helical span at residues 344 to 364; that stretch reads ILGTFFSIVVTCMWVLVFALT. Topologically, residues 365-375 are cytoplasmic; that stretch reads VYKSCTKELFR.

The protein belongs to the tellurite-resistance/dicarboxylate transporter (TDT) family.

It localises to the cell membrane. Functionally, sulphite efflux pump required for the secretion of sulphite as a reducing agent. In the presence of sulphite, cystine in keratin is directly cleaved to cysteine and S-sulphocysteine, and thereby, reduced proteins become accessible to hydrolysis by a variety of secreted endo- and exoproteases. Excretion of sulphite mediated by an efflux pump also represents a detoxification pathway for dermatophytes during infection of the epidermal stratum corneum, hair and nails, which are rich in cysteine. The protein is Sulfite efflux pump SSU1 of Arthroderma benhamiae (strain ATCC MYA-4681 / CBS 112371) (Trichophyton mentagrophytes).